The following is a 430-amino-acid chain: Tol-Pal system protein TolB (430 aa).

The first 21 residues, 1-21 (MKQALRVAFGFLILWASVLHA), serve as a signal peptide directing secretion.

It belongs to the TolB family. In terms of assembly, the Tol-Pal system is composed of five core proteins: the inner membrane proteins TolA, TolQ and TolR, the periplasmic protein TolB and the outer membrane protein Pal. They form a network linking the inner and outer membranes and the peptidoglycan layer.

The protein resides in the periplasm. In terms of biological role, part of the Tol-Pal system, which plays a role in outer membrane invagination during cell division and is important for maintaining outer membrane integrity. TolB occupies a key intermediary position in the Tol-Pal system because it communicates directly with both membrane-embedded components, Pal in the outer membrane and TolA in the inner membrane. The protein is Tol-Pal system protein TolB of Shigella flexneri.